We begin with the raw amino-acid sequence, 46 residues long: Homeobox protein Hox-D4 (46 aa).

A DNA-binding region (homeobox) is located at residues Val1 to Thr46.

The protein belongs to the Antp homeobox family. Deformed subfamily. As to quaternary structure, forms a DNA-binding heterodimer with transcription factor PBX1.

It localises to the nucleus. Functionally, sequence-specific transcription factor which is part of a developmental regulatory system that provides cells with specific positional identities on the anterior-posterior axis. The protein is Homeobox protein Hox-D4 (HOXD4) of Ovis aries (Sheep).